Here is a 202-residue protein sequence, read N- to C-terminus: V-type proton ATPase subunit E (202 aa).

Belongs to the V-ATPase E subunit family.

In terms of biological role, produces ATP from ADP in the presence of a proton gradient across the membrane. The chain is V-type proton ATPase subunit E from Halothermothrix orenii (strain H 168 / OCM 544 / DSM 9562).